The sequence spans 549 residues: Chaperonin GroEL (549 aa).

ATP is bound by residues 29 to 32 (TAGP), Lys50, 86 to 90 (DGTTT), Gly418, and Asp499.

Belongs to the chaperonin (HSP60) family. Forms a cylinder of 14 subunits composed of two heptameric rings stacked back-to-back. Interacts with the co-chaperonin GroES.

It localises to the cytoplasm. The enzyme catalyses ATP + H2O + a folded polypeptide = ADP + phosphate + an unfolded polypeptide.. In terms of biological role, together with its co-chaperonin GroES, plays an essential role in assisting protein folding. The GroEL-GroES system forms a nano-cage that allows encapsulation of the non-native substrate proteins and provides a physical environment optimized to promote and accelerate protein folding. In Wolbachia pipientis wMel, this protein is Chaperonin GroEL.